An 875-amino-acid chain; its full sequence is Alanine--tRNA ligase (875 aa).

Zn(2+) contacts are provided by histidine 564, histidine 568, cysteine 666, and histidine 670.

It belongs to the class-II aminoacyl-tRNA synthetase family. As to quaternary structure, homotetramer. It depends on Zn(2+) as a cofactor.

It localises to the cytoplasm. It catalyses the reaction tRNA(Ala) + L-alanine + ATP = L-alanyl-tRNA(Ala) + AMP + diphosphate. Catalyzes the attachment of alanine to tRNA(Ala) in a two-step reaction: alanine is first activated by ATP to form Ala-AMP and then transferred to the acceptor end of tRNA(Ala). Also edits incorrectly charged Ser-tRNA(Ala) and Gly-tRNA(Ala) via its editing domain. The polypeptide is Alanine--tRNA ligase (Yersinia pseudotuberculosis serotype IB (strain PB1/+)).